Consider the following 298-residue polypeptide: Rhodopsin (298 aa).

Residues 1–15 are Extracellular-facing; it reads IHLHWYEYPPMNPMM. A helical transmembrane segment spans residues 16–40; that stretch reads YPLLLIFMLFTGILCLAGNFVTIWV. The Cytoplasmic segment spans residues 41–52; that stretch reads FMNTKSLRTPAN. Residues 53–75 traverse the membrane as a helical segment; that stretch reads LLVVNLAMSDFLMMFTMFPPMMV. Residues 76–89 lie on the Extracellular side of the membrane; that stretch reads TCYYHTWTLGPTFC. C89 and C166 are disulfide-bonded. Residues 90–112 traverse the membrane as a helical segment; it reads QVYAFLGNLCGCASIWTMVFITF. A 'Ionic lock' involved in activated form stabilization motif is present at residues 113-115; sequence DRY. The Cytoplasmic portion of the chain corresponds to 113 to 131; that stretch reads DRYNVIVKGVAGEPLSTKK. The chain crosses the membrane as a helical span at residues 132-152; sequence ASLWILTIWVLSTTWCMAPFF. Residues 153–179 are Extracellular-facing; that stretch reads GWNHYVPEGNLTGCGTDYLSEDILSRS. The N-linked (GlcNAc...) asparagine glycan is linked to N162. A helical membrane pass occupies residues 180 to 201; that stretch reads YLYVYSTWVYFLPLAITIYCYV. Residues 202 to 242 lie on the Cytoplasmic side of the membrane; sequence FIIKAVAAHEKGMRDQAKKMGIKSLRNEEAQKTSAECRLAK. Residues 243 to 264 form a helical membrane-spanning segment; sequence IAMTTVALWFIAWTPYLLINWV. Residues 265 to 275 are Extracellular-facing; the sequence is GMFARSYLSPV. The chain crosses the membrane as a helical span at residues 276–297; the sequence is YTIWGYVFAKANAVYNPIVYAI. K285 is subject to N6-(retinylidene)lysine.

It belongs to the G-protein coupled receptor 1 family. Opsin subfamily. In terms of assembly, homodimer. Interacts with GNAQ. Contains one covalently linked retinal chromophore.

The protein resides in the cell projection. It is found in the rhabdomere membrane. Its function is as follows. Photoreceptor required for image-forming vision at low light intensity. Can use both retinal and 3-dehydroretinal as visual pigment. Light-induced isomerization of 11-cis to all-trans retinal triggers a conformational change that activates signaling via G-proteins. Signaling via GNAQ probably mediates the activation of phospholipase C. The chain is Rhodopsin (RHO) from Procambarus orcinus (Crayfish).